The primary structure comprises 85 residues: MAHKKAAGSTKNGRDSNAKRLGVKRFGGEQVLAGSIIVRQRGTKFHAGDNVGRGKDDTLFAKATGEVAFVTKGKPLRTFVTIKAD.

Positions 1 to 21 are disordered; it reads MAHKKAAGSTKNGRDSNAKRL.

Belongs to the bacterial ribosomal protein bL27 family.

This Hydrogenovibrio crunogenus (strain DSM 25203 / XCL-2) (Thiomicrospira crunogena) protein is Large ribosomal subunit protein bL27.